The following is a 239-amino-acid chain: Peptidyl-tRNA hydrolase (239 aa).

Residue tyrosine 14 coordinates tRNA. Histidine 19 (proton acceptor) is an active-site residue. Residues phenylalanine 64, asparagine 66, and asparagine 112 each coordinate tRNA. The segment at 188–239 (APPRSSTSKPKAQDNREDAAQAAEERSETRTPPEARPEDTRSALQKLADKFR) is disordered. The segment covering 198-239 (KAQDNREDAAQAAEERSETRTPPEARPEDTRSALQKLADKFR) has biased composition (basic and acidic residues).

Belongs to the PTH family. As to quaternary structure, monomer.

Its subcellular location is the cytoplasm. It catalyses the reaction an N-acyl-L-alpha-aminoacyl-tRNA + H2O = an N-acyl-L-amino acid + a tRNA + H(+). Functionally, hydrolyzes ribosome-free peptidyl-tRNAs (with 1 or more amino acids incorporated), which drop off the ribosome during protein synthesis, or as a result of ribosome stalling. Catalyzes the release of premature peptidyl moieties from peptidyl-tRNA molecules trapped in stalled 50S ribosomal subunits, and thus maintains levels of free tRNAs and 50S ribosomes. The protein is Peptidyl-tRNA hydrolase of Jannaschia sp. (strain CCS1).